Reading from the N-terminus, the 442-residue chain is CBL-interacting serine/threonine-protein kinase 14 (442 aa).

The Protein kinase domain maps to 22 to 276; the sequence is YEVGKLVGCG…IEEIIHDPWF (255 aa). Residues 28–36 and Lys-51 each bind ATP; that span reads VGCGAFAKV. Asp-144 serves as the catalytic Proton acceptor. The activation loop stretch occupies residues 162–191; the sequence is DFGLSALTDQIRPDGLLHTLCGTPAYVAPE. Ser-166 is modified (phosphoserine). Thr-180 bears the Phosphothreonine mark. The NAF domain occupies 305–329; the sequence is MGARRMNAFDIISGSPGFNLSGLFG. The segment at 335 to 365 is PPI; it reads DRVERFVSAWTAERVVERLEEIVSAENLTVA.

It belongs to the protein kinase superfamily. CAMK Ser/Thr protein kinase family. SNF1 subfamily. Interacts with CBL2. Interacts with CBL3. Interacts with CBL8. Interacts with CBL9. Interacts with KIN10 and KIN11. The cofactor is Mn(2+). Predominant in roots, cauline leaves, and flowers. Ubiquitous with highest expression in 7-day-old seedlings and flower buds, followed by that in cauline leaves and young siliques.

The protein resides in the cytoplasm. Its subcellular location is the nucleus. The enzyme catalyses L-seryl-[protein] + ATP = O-phospho-L-seryl-[protein] + ADP + H(+). The catalysed reaction is L-threonyl-[protein] + ATP = O-phospho-L-threonyl-[protein] + ADP + H(+). CIPK serine-threonine protein kinases interact with CBL proteins. Binding of a CBL protein to the regulatory NAF domain of CIPK protein lead to the activation of the kinase in a calcium-dependent manner. The sequence is that of CBL-interacting serine/threonine-protein kinase 14 (CIPK14) from Arabidopsis thaliana (Mouse-ear cress).